The chain runs to 261 residues: Ribonuclease PH (261 aa).

Phosphate is bound by residues Arg-86 and Gly-124–Arg-126.

This sequence belongs to the RNase PH family. Homohexameric ring arranged as a trimer of dimers.

It carries out the reaction tRNA(n+1) + phosphate = tRNA(n) + a ribonucleoside 5'-diphosphate. In terms of biological role, phosphorolytic 3'-5' exoribonuclease that plays an important role in tRNA 3'-end maturation. Removes nucleotide residues following the 3'-CCA terminus of tRNAs; can also add nucleotides to the ends of RNA molecules by using nucleoside diphosphates as substrates, but this may not be physiologically important. Probably plays a role in initiation of 16S rRNA degradation (leading to ribosome degradation) during starvation. The protein is Ribonuclease PH of Persephonella marina (strain DSM 14350 / EX-H1).